We begin with the raw amino-acid sequence, 433 residues long: tRNA modification GTPase MnmE (433 aa).

(6S)-5-formyl-5,6,7,8-tetrahydrofolate is bound by residues Arg24, Glu86, and Lys125. Residues 218-363 (GARLALIGAP…LKEALREALL (146 aa)) form the TrmE-type G domain. Position 228 (Asn228) interacts with K(+). Residues 228–233 (NAGKSS), 247–253 (SPIPGTT), and 272–275 (DTAG) contribute to the GTP site. Ser232 is a binding site for Mg(2+). K(+) contacts are provided by Ser247, Ile249, and Thr252. Thr253 is a binding site for Mg(2+). Lys433 contacts (6S)-5-formyl-5,6,7,8-tetrahydrofolate.

Belongs to the TRAFAC class TrmE-Era-EngA-EngB-Septin-like GTPase superfamily. TrmE GTPase family. As to quaternary structure, homodimer. Heterotetramer of two MnmE and two MnmG subunits. The cofactor is K(+).

The protein localises to the cytoplasm. In terms of biological role, exhibits a very high intrinsic GTPase hydrolysis rate. Involved in the addition of a carboxymethylaminomethyl (cmnm) group at the wobble position (U34) of certain tRNAs, forming tRNA-cmnm(5)s(2)U34. This Thermus thermophilus (strain ATCC BAA-163 / DSM 7039 / HB27) protein is tRNA modification GTPase MnmE.